The primary structure comprises 812 residues: Probable inorganic carbon transporter subunit DabA (812 aa).

Positions 339, 341, 501, and 516 each coordinate Zn(2+).

The protein belongs to the inorganic carbon transporter (TC 9.A.2) DabA family. In terms of assembly, forms a complex with DabB. Zn(2+) serves as cofactor.

It is found in the cell inner membrane. Part of an energy-coupled inorganic carbon pump. This Xanthomonas axonopodis pv. citri (strain 306) protein is Probable inorganic carbon transporter subunit DabA.